The following is a 506-amino-acid chain: Sodium transporter HKT1 (506 aa).

Topologically, residues 1 to 19 (MDRVVAKIAKIRSQLTKLR) are cytoplasmic. A helical transmembrane segment spans residues 20-40 (SLFFLYFIYFLFFSFLGFLAL). Topologically, residues 41 to 81 (KITKPRTTSRPHDFDLFFTSVSAITVSSMSTVDMEVFSNTQ) are extracellular. Residues 82–102 (LIFLTILMFLGGEIFTSFLNL) traverse the membrane as a helical segment. Over 103-159 (YVSYFTKFVFPHNKIRHILGSYNSDSSIEDRCDVETVTDYREGLIKIDERASKCLYS) the chain is Cytoplasmic. The helical transmembrane segment at 160–180 (VVLSYHLVTNLVGSVLLLVYV) threads the bilayer. The Extracellular segment spans residues 181–232 (NFVKTARDVLSSKEISPLTFSVFTTVSTFANCGFVPTNENMIIFRKNSGLIW). A helical membrane pass occupies residues 233–253 (LLIPQVLMGNTLFPCFLVLLI). The Cytoplasmic portion of the chain corresponds to 254-286 (WGLYKITKRDEYGYILKNHNKMGYSHLLSVRLC). A helical membrane pass occupies residues 287-307 (VLLGVTVLGFLIIQLLFFCAF). Over 308-348 (EWTSESLEGMSSYEKLVGSLFQVVNSRHTGETIVDLSTLSP) the chain is Extracellular. A helical membrane pass occupies residues 349 to 369 (AILVLFILMMYLPPYTLFMPL). Residues 370-392 (TEQKTIEKEGGDDDSENGKKVKK) lie on the Cytoplasmic side of the membrane. The helical transmembrane segment at 393-413 (SGLIVSQLSFLTICIFLISIT) threads the bilayer. At 414–465 (ERQNLQRDPINFNVLNITLEVISAYGNVGFTTGYSCERRVDISDGGCKDASY) the chain is on the extracellular side. Asparagine 429 carries N-linked (GlcNAc...) asparagine glycosylation. Residues 466-486 (GFAGRWSPMGKFVLIIVMFYG) traverse the membrane as a helical segment. At 487–506 (RFKQFTAKSGRAWILYPSSS) the chain is on the cytoplasmic side.

It belongs to the TrkH potassium transport family. HKT (TC 2.A.38.3) subfamily. Post-translationally, N-glycosylated. Not essential for functional expression and membrane targeting. Highly expressed in roots. Expressed in flowers, leaves and stems. Expressed in the vascular tissues of every organs. In roots, leaves and flower peduncles, it is only expressed in the phloem tissues. Not expressed in root peripheral cells.

The protein resides in the cell membrane. The catalysed reaction is Na(+)(in) = Na(+)(out). Its function is as follows. Sodium transporter protein, which plays a central role in plant tolerance to salt. Upon prolongated exposure to high concentrations, Na(+) translocates from the roots to the transpiring leaves where it can increase to toxic level. Involved in Na(+) recirculation from shoots to roots, probably by mediating Na(+) loading into the phloem sap in shoots and unloading in roots, thereby removing large amounts of Na(+) from the shoot. Does not transport K(+) but regulates K(+) nutrient status via its ability to facilitate Na(+) homeostasis. Probably not involved in root uptake of Na(+). This is Sodium transporter HKT1 (HKT1) from Arabidopsis thaliana (Mouse-ear cress).